A 98-amino-acid polypeptide reads, in one-letter code: Toxin ParE1 (98 aa).

This sequence belongs to the RelE toxin family.

Its function is as follows. Toxic component of a type II toxin-antitoxin (TA) system. Its toxic effect is neutralized by coexpression with cognate antitoxin ParD1. This is Toxin ParE1 (parE1) from Mycobacterium tuberculosis (strain CDC 1551 / Oshkosh).